Reading from the N-terminus, the 121-residue chain is Ribosome-binding factor A (121 aa).

This sequence belongs to the RbfA family. Monomer. Binds 30S ribosomal subunits, but not 50S ribosomal subunits or 70S ribosomes.

Its subcellular location is the cytoplasm. Its function is as follows. One of several proteins that assist in the late maturation steps of the functional core of the 30S ribosomal subunit. Associates with free 30S ribosomal subunits (but not with 30S subunits that are part of 70S ribosomes or polysomes). Required for efficient processing of 16S rRNA. May interact with the 5'-terminal helix region of 16S rRNA. This is Ribosome-binding factor A from Finegoldia magna (strain ATCC 29328 / DSM 20472 / WAL 2508) (Peptostreptococcus magnus).